The primary structure comprises 103 residues: UPF0145 protein BC_1816 (103 aa).

The protein belongs to the UPF0145 family.

The protein is UPF0145 protein BC_1816 of Bacillus cereus (strain ATCC 14579 / DSM 31 / CCUG 7414 / JCM 2152 / NBRC 15305 / NCIMB 9373 / NCTC 2599 / NRRL B-3711).